A 344-amino-acid polypeptide reads, in one-letter code: MSQHSNYQMTTASDYYSTKPVLSAIRSHKLISSVFEGKCPSDYESAWSPTSPLDFRLFSTLGNPFAASSSRSIWRGKQRSWDSGKVGLSIVHSLVDDHHTDSSATIVLPSPDSKNIIFGSLMRSGQKPHLLSQPFTKALMPKDVIPNAVFEIGHDVIDVLELRKSGSVDAAYCSGAENFSVNNNACQVTKQDPGSLNGGTESDMEISEDYTCVISHGPNPKTTHFYGDQVMESVEREELKNRCCKNEKESIFAVAPLDLTTPVDVLPPKDFLSFCYGCSKKLGMGEDIYMYSGYKAFCSSECRSKEIDLDEEMEDGDEEEAIKSVSSSDKESKKKSNGVFFTVG.

The FLZ-type zinc finger occupies 270-314 (DFLSFCYGCSKKLGMGEDIYMYSGYKAFCSSECRSKEIDLDEEME). The segment covering 309–320 (LDEEMEDGDEEE) has biased composition (acidic residues). The segment at 309 to 344 (LDEEMEDGDEEEAIKSVSSSDKESKKKSNGVFFTVG) is disordered.

It belongs to the FLZ family. Interacts with KIN10 and KIN11 via its FLZ-type zinc finger domain. Interacts with KINB1, KINB2 and KINB3 via its N-terminal part. Forms homodimer and heterodimer with FLZ2 and FLZ12 in vitro. In terms of tissue distribution, early expressed in hypocotyl and cotyledon and preferentially in the stelar region of the shoot and root. Later expressed in root-shoot junction, lateral root, old or senescing leaves and in pistil and pollen of flower buds or open flowers.

The protein localises to the cytoplasm. It localises to the nucleus. It is found in the endoplasmic reticulum. May act as an adapter to facilitate the interaction of SnRK1 complex with effector proteins, conferring tissue- and stimulus-type specific differences in the SnRK1 regulation pathway. Negatively regulates KIN10 leading to a repression of the SnRK1 signaling pathway. This Arabidopsis thaliana (Mouse-ear cress) protein is FCS-Like Zinc finger 10.